A 385-amino-acid chain; its full sequence is Outer membrane protein assembly factor BamB (385 aa).

The first 20 residues, 1 to 20 (MRKVLKKAALCTFGFSMLFG), serve as a signal peptide directing secretion. Residue C21 is the site of N-palmitoyl cysteine attachment. C21 is lipidated: S-diacylglycerol cysteine.

It belongs to the BamB family. In terms of assembly, part of the Bam complex.

The protein resides in the cell outer membrane. Its function is as follows. Part of the outer membrane protein assembly complex, which is involved in assembly and insertion of beta-barrel proteins into the outer membrane. This Aliivibrio fischeri (strain ATCC 700601 / ES114) (Vibrio fischeri) protein is Outer membrane protein assembly factor BamB.